The sequence spans 313 residues: MAALTDFAFMYRWFKNCNLVKNLSEKYVFITGCDSGFGNLLAKQLVDRGMKVLAACLTEEGAQKLLQDTSHQLQTFLLDVTKSENVKEAAQWVRDQVGEQGLWALVNNAGVGLPSGPNEWLTIKDFVKVININLVGLIDVTLNMLPMIKKARGRVVNMSSSGGRVAIFGGGYCVSKFGVEAFSDSIRRELHFFGVKVSIIEPGNYKTSILGQEALESRMKKLWDRLPQETRDSYGEEYFQTYTKKLVNLMRSAEPRISDVTNSMEHAIVSRSPRIRYNPGLDVKFLYLTLAKLPTPVTDFILSRYLPRPADSV.

Residue 29 to 53 (FITGCDSGFGNLLAKQLVDRGMKVL) coordinates NADP(+). Residue Ser160 participates in substrate binding. Catalysis depends on Tyr172, which acts as the Proton acceptor. At Ser185 the chain carries Phosphoserine.

The protein belongs to the short-chain dehydrogenases/reductases (SDR) family. Highly expressed in liver.

It localises to the cytoplasm. It carries out the reaction a N-[omega-(9R,10R)-epoxy-(13R)-hydroxy-(11E)-octadecenoyloxy]acyl-beta-D-glucosyl-(1&lt;-&gt;1)-sphing-4E-enine + NAD(+) = a N-[omega-(9R,10R)-epoxy-13-oxo-(11E)-octadecenoyloxy]acyl-beta-D-glucosyl-(1&lt;-&gt;1)-sphing-4E-enine + NADH + H(+). The catalysed reaction is a N-[omega-(9R,10R)-epoxy-(13R)-hydroxy-(11E)-octadecenoyloxy]-acylsphing-4E-enine + NAD(+) = a N-[omega-(9R,10R)-epoxy-13-oxo-(11E)-octadecenoyloxy]-acylsphing-4E-enine + NADH + H(+). In terms of biological role, plays a crucial role in the formation of the epidermal permeability barrier. Catalyzes the NAD+-dependent dehydrogenation of the linoleate 9,10-trans-epoxy-11E-13-alcohol esterified in omega-O-acylceramides (such as in N-[omega-(9R,10R)-epoxy-(13R)-hydroxy-(11E)-octadecenoyloxy]-acylsphing-4E-enine) to the corresponding 13-ketone, the reactive moiety required for binding of epidermal ceramides to proteins. Displays weak conversion of all-trans-retinal to all-trans-retinol in the presence of NADH. Has apparently no steroid dehydrogenase activity. The protein is Short-chain dehydrogenase/reductase family 9C member 7 (Sdr9c7) of Mus musculus (Mouse).